The following is a 586-amino-acid chain: Arginine--tRNA ligase (586 aa).

A 'HIGH' region motif is present at residues 131–141 (ANPTGPMHVGH).

This sequence belongs to the class-I aminoacyl-tRNA synthetase family. In terms of assembly, monomer.

It localises to the cytoplasm. It carries out the reaction tRNA(Arg) + L-arginine + ATP = L-arginyl-tRNA(Arg) + AMP + diphosphate. The chain is Arginine--tRNA ligase from Azorhizobium caulinodans (strain ATCC 43989 / DSM 5975 / JCM 20966 / LMG 6465 / NBRC 14845 / NCIMB 13405 / ORS 571).